The primary structure comprises 454 residues: Light-independent protochlorophyllide reductase subunit N (454 aa).

3 residues coordinate [4Fe-4S] cluster: Cys-22, Cys-47, and Cys-107.

It belongs to the BchN/ChlN family. In terms of assembly, protochlorophyllide reductase is composed of three subunits; ChlL, ChlN and ChlB. Forms a heterotetramer of two ChlB and two ChlN subunits. [4Fe-4S] cluster serves as cofactor.

It localises to the plastid. The protein resides in the chloroplast. The enzyme catalyses chlorophyllide a + oxidized 2[4Fe-4S]-[ferredoxin] + 2 ADP + 2 phosphate = protochlorophyllide a + reduced 2[4Fe-4S]-[ferredoxin] + 2 ATP + 2 H2O. It functions in the pathway porphyrin-containing compound metabolism; chlorophyll biosynthesis (light-independent). Component of the dark-operative protochlorophyllide reductase (DPOR) that uses Mg-ATP and reduced ferredoxin to reduce ring D of protochlorophyllide (Pchlide) to form chlorophyllide a (Chlide). This reaction is light-independent. The NB-protein (ChlN-ChlB) is the catalytic component of the complex. The sequence is that of Light-independent protochlorophyllide reductase subunit N from Cycas taitungensis (Prince sago).